The chain runs to 544 residues: Cytochrome P450 monooxygenase verL (544 aa).

The helical transmembrane segment at V3–W23 threads the bilayer. Residue C446 coordinates heme. The tract at residues Q520–R544 is disordered.

The protein belongs to the cytochrome P450 family. Heme is required as a cofactor.

The protein localises to the membrane. It participates in mycotoxin biosynthesis. Its function is as follows. Cytochrome P450 monooxygenase; part of the gene cluster that mediates the biosynthesis of 11'-deoxyverticillin A, one of the dimeric epipolythiodioxopiperazines (ETPs) from the verticillin family that act as mycotoxins. 11'-deoxyverticillin A is required for normal conidiation. The nonribosomal peptide synthetase verP is speculated to be responsible for condensation of amino acids to form the carbon skeleton of verticillin, whereas the cluster-specific tailoring enzymes are involved in further modifications leading to the production of 11'-deoxyverticillin A. The polypeptide is Cytochrome P450 monooxygenase verL (Clonostachys rogersoniana).